A 404-amino-acid chain; its full sequence is Cysteine desulfurase IscS (404 aa).

Residues A75 to T76, N155, Q183, and S203 to H205 contribute to the pyridoxal 5'-phosphate site. The residue at position 206 (K206) is an N6-(pyridoxal phosphate)lysine. Residue T243 participates in pyridoxal 5'-phosphate binding. The active-site Cysteine persulfide intermediate is the C328. A [2Fe-2S] cluster-binding site is contributed by C328.

This sequence belongs to the class-V pyridoxal-phosphate-dependent aminotransferase family. NifS/IscS subfamily. In terms of assembly, homodimer. Forms a heterotetramer with IscU, interacts with other sulfur acceptors. Requires pyridoxal 5'-phosphate as cofactor.

The protein resides in the cytoplasm. The catalysed reaction is (sulfur carrier)-H + L-cysteine = (sulfur carrier)-SH + L-alanine. Its pathway is cofactor biosynthesis; iron-sulfur cluster biosynthesis. Functionally, master enzyme that delivers sulfur to a number of partners involved in Fe-S cluster assembly, tRNA modification or cofactor biosynthesis. Catalyzes the removal of elemental sulfur atoms from cysteine to produce alanine. Functions as a sulfur delivery protein for Fe-S cluster synthesis onto IscU, an Fe-S scaffold assembly protein, as well as other S acceptor proteins. The polypeptide is Cysteine desulfurase IscS (Shewanella baltica (strain OS185)).